Consider the following 169-residue polypeptide: Glycine-rich RNA-binding protein GRP2A (169 aa).

An RRM domain is found at 8-86 (YRCFVGGLAW…RSITVNEAQS (79 aa)). Disordered regions lie at residues 69–100 (MNGQ…GGGG) and 125–169 (YSGG…GGGW). The segment covering 89-100 (SGAGGGGRGGGG) has biased composition (gly residues).

In terms of tissue distribution, predominantly expressed in meristematic and growing tissue.

The protein resides in the nucleus. Functionally, may play a general role in circadian phenomena associated with meristematic tissue. In Sinapis alba (White mustard), this protein is Glycine-rich RNA-binding protein GRP2A.